Reading from the N-terminus, the 362-residue chain is tRNA/tmRNA (uracil-C(5))-methyltransferase (362 aa).

Residues glutamine 186, tyrosine 214, asparagine 219, glutamate 235, and aspartate 295 each contribute to the S-adenosyl-L-methionine site. Residue cysteine 320 is the Nucleophile of the active site. Glutamate 354 (proton acceptor) is an active-site residue.

The protein belongs to the class I-like SAM-binding methyltransferase superfamily. RNA M5U methyltransferase family. TrmA subfamily.

The catalysed reaction is uridine(54) in tRNA + S-adenosyl-L-methionine = 5-methyluridine(54) in tRNA + S-adenosyl-L-homocysteine + H(+). It catalyses the reaction uridine(341) in tmRNA + S-adenosyl-L-methionine = 5-methyluridine(341) in tmRNA + S-adenosyl-L-homocysteine + H(+). In terms of biological role, dual-specificity methyltransferase that catalyzes the formation of 5-methyluridine at position 54 (m5U54) in all tRNAs, and that of position 341 (m5U341) in tmRNA (transfer-mRNA). In Stutzerimonas stutzeri (strain A1501) (Pseudomonas stutzeri), this protein is tRNA/tmRNA (uracil-C(5))-methyltransferase.